A 205-amino-acid polypeptide reads, in one-letter code: Cytochrome c biogenesis ATP-binding export protein CcmA 1 (205 aa).

In terms of domain architecture, ABC transporter spans 2 to 205 (LEARDLYCER…LALTGGEAGL (204 aa)). Residue 34-41 (GGNGAGKT) coordinates ATP.

This sequence belongs to the ABC transporter superfamily. CcmA exporter (TC 3.A.1.107) family. The complex is composed of two ATP-binding proteins (CcmA) and two transmembrane proteins (CcmB).

The protein resides in the cell inner membrane. The catalysed reaction is heme b(in) + ATP + H2O = heme b(out) + ADP + phosphate + H(+). Its function is as follows. Part of the ABC transporter complex CcmAB involved in the biogenesis of c-type cytochromes; once thought to export heme, this seems not to be the case, but its exact role is uncertain. Responsible for energy coupling to the transport system. The protein is Cytochrome c biogenesis ATP-binding export protein CcmA 1 of Salmonella paratyphi A (strain ATCC 9150 / SARB42).